Here is a 638-residue protein sequence, read N- to C-terminus: Rik1-associated factor 1 (638 aa).

WD repeat units follow at residues 297–336 (KEYS…CGIF), 486–525 (TTQK…KPLS), 544–583 (EVDA…PFIQ), and 587–626 (EMNS…GNKF).

As to quaternary structure, component of the Clr4 methyltransferase complex (ClrC) composed of at least clr4, rik1, pcu4, rbx1, raf1 and raf2. The cullin pcu4, rik1, raf1, raf2 and the ring-box protein rbx1 are components of an E3 ubiquitin ligase, whose activity is essential for heterochromatin assembly. Interacts with nup189.

It is found in the cytoplasm. The protein resides in the nucleus. The protein localises to the chromosome. Component of the Clr4 methyltransferase complex (ClrC) which contributes to the establishment of heterochromatin by specifically methylating histone H3 to form H3K9me. ClrC preferentially ubiquitylates H3K14 and ClrC-mediated H3 ubiquitination promotes clr4 methyltransferase activity for the methylation of H3K9. H3K9me represents a specific tag for epigenetic transcriptional repression by recruiting swi6/HP1 to methylated histones which leads to transcriptional silencing within centromeric heterochromatin, telomeric regions and at the silent mating-type loci. Has a role in both mitotic and meiotic chromosome segregation. In Schizosaccharomyces pombe (strain 972 / ATCC 24843) (Fission yeast), this protein is Rik1-associated factor 1 (raf1).